Reading from the N-terminus, the 689-residue chain is Elongation factor G (689 aa).

Positions 8 to 282 (ENTRNLGIMA…AVVDYLPSPL (275 aa)) constitute a tr-type G domain. GTP is bound by residues 17-24 (AHIDAGKT), 81-85 (DTPGH), and 135-138 (NKMD).

This sequence belongs to the TRAFAC class translation factor GTPase superfamily. Classic translation factor GTPase family. EF-G/EF-2 subfamily.

The protein resides in the cytoplasm. In terms of biological role, catalyzes the GTP-dependent ribosomal translocation step during translation elongation. During this step, the ribosome changes from the pre-translocational (PRE) to the post-translocational (POST) state as the newly formed A-site-bound peptidyl-tRNA and P-site-bound deacylated tRNA move to the P and E sites, respectively. Catalyzes the coordinated movement of the two tRNA molecules, the mRNA and conformational changes in the ribosome. This is Elongation factor G from Mesoplasma florum (strain ATCC 33453 / NBRC 100688 / NCTC 11704 / L1) (Acholeplasma florum).